The chain runs to 559 residues: Putative protease Do-like 3, mitochondrial (559 aa).

A mitochondrion-targeting transit peptide spans 1–48 (MSFLCVRTVSRFRSLSRALAPGFLLLHGNAVPKTAVFFRQQSSNTRLF). Positions 59 to 81 (ENNSKSALKNKLPPGKEVSSKDA) are disordered. The tract at residues 100-292 (VFTVSSKPRL…FLNAIEESGE (193 aa)) is serine protease. Active-site charge relay system residues include H138, D169, and S247. Residues 300–380 (NLTYQKMDND…HLVSMKKPCE (81 aa)) form the PDZ domain. Residues 538-559 (SEDLQPKQQNKRSKVPPKSKEH) form a disordered region. Over residues 546-559 (QNKRSKVPPKSKEH) the composition is skewed to basic residues.

Belongs to the peptidase S1C family.

The protein resides in the mitochondrion matrix. Functionally, putative serine protease. This chain is Putative protease Do-like 3, mitochondrial (DEGP3), found in Arabidopsis thaliana (Mouse-ear cress).